The sequence spans 33 residues: MNIDILSQLIAIAVTLFLGPVVVILIASRNGNL.

The chain crosses the membrane as a helical span at residues 5-25 (ILSQLIAIAVTLFLGPVVVIL).

It belongs to the Psb30/Ycf12 family. PSII is composed of 1 copy each of membrane proteins PsbA, PsbB, PsbC, PsbD, PsbE, PsbF, PsbH, PsbI, PsbJ, PsbK, PsbL, PsbM, PsbT, PsbX, PsbY, PsbZ, Psb30/Ycf12, peripheral proteins of the oxygen-evolving complex and a large number of cofactors. It forms dimeric complexes.

Its subcellular location is the plastid. It localises to the chloroplast thylakoid membrane. In terms of biological role, a core subunit of photosystem II (PSII), probably helps stabilize the reaction center. This Oedogonium cardiacum (Filamentous green alga) protein is Photosystem II reaction center protein Psb30.